Reading from the N-terminus, the 487-residue chain is NAD-dependent histone deacetylase HST3 (487 aa).

One can recognise a Deacetylase sirtuin-type domain in the interval 15–336 (PADTSIKLHE…FLTQEQLDSE (322 aa)). Residues 40–59 (GAGI…DGLY) and 129–132 (QNID) each bind NAD(+). Histidine 167 (proton acceptor) is an active-site residue. The Zn(2+) site is built by cysteine 175, cysteine 178, cysteine 200, and cysteine 203. NAD(+) contacts are provided by residues 261–263 (GTS), 291–293 (NKT), and cysteine 312. Basic and acidic residues predominate over residues 397 to 406 (VESVSVKEEP). Residues 397–487 (VESVSVKEEP…ARKGITLDQH (91 aa)) form a disordered region. Over residues 415–425 (HKPKQATKLKR) the composition is skewed to basic residues. Residues 448-459 (DQLSSPASSING) are compositionally biased toward polar residues.

This sequence belongs to the sirtuin family. Class I subfamily. Requires Zn(2+) as cofactor.

The protein localises to the cytoplasm. The protein resides in the nucleus. It carries out the reaction N(6)-acetyl-L-lysyl-[protein] + NAD(+) + H2O = 2''-O-acetyl-ADP-D-ribose + nicotinamide + L-lysyl-[protein]. NAD-dependent histone deacetylase, which could function in telomeric silencing, cell cycle progression and chromosome stability. The sequence is that of NAD-dependent histone deacetylase HST3 (HST3) from Candida albicans (strain SC5314 / ATCC MYA-2876) (Yeast).